We begin with the raw amino-acid sequence, 167 residues long: Large ribosomal subunit protein bL9 (167 aa).

This sequence belongs to the bacterial ribosomal protein bL9 family.

Functionally, binds to the 23S rRNA. In Chlamydia muridarum (strain MoPn / Nigg), this protein is Large ribosomal subunit protein bL9.